A 435-amino-acid polypeptide reads, in one-letter code: Protein lin-54 (435 aa).

The interval D73–P136 is disordered. Positions T102–P120 are enriched in polar residues. Residues Q173–T288 enclose the CRC domain. The tract at residues K175–Y188 is DNA-binding. C177, C179, C184, C189, C191, C198, C201, C203, and C206 together coordinate Zn(2+). The linker stretch occupies residues I235–Q250. Zn(2+)-binding residues include C253, C255, C260, C265, C267, C274, C278, C280, and C283. Residues C253–E266 form a DNA-binding region. Residues L415–S435 form a disordered region.

This sequence belongs to the lin-54 family. As to quaternary structure, component of the DRM complex, at least composed of lin-9, lin-35, lin-37, lin-52, lin-53, lin-54- dpl-1 and efl-1.

Its subcellular location is the nucleus. It localises to the chromosome. Synthetic multivulva class B (synMuvB) protein. SynMuvB proteins are required to repress the induction of vulval development by Ras signaling and probably act by forming the multiprotein DRM complex that repress transcription. The sequence is that of Protein lin-54 from Caenorhabditis elegans.